The following is a 61-amino-acid chain: Large ribosomal subunit protein eL24 (61 aa).

Zn(2+) contacts are provided by Cys-7, Cys-10, Cys-33, and Cys-37. The C4-type zinc-finger motif lies at 7-37 (CSFCGKEIPPATGLMYIRNDGSILWFCSNKC).

It belongs to the eukaryotic ribosomal protein eL24 family. As to quaternary structure, part of the 50S ribosomal subunit. Forms a cluster with proteins L3 and L14. Requires Zn(2+) as cofactor.

Functionally, binds to the 23S rRNA. This is Large ribosomal subunit protein eL24 from Sulfurisphaera tokodaii (strain DSM 16993 / JCM 10545 / NBRC 100140 / 7) (Sulfolobus tokodaii).